The chain runs to 401 residues: Imidazolonepropionase (401 aa).

Fe(3+) contacts are provided by H70 and H72. The Zn(2+) site is built by H70 and H72. R79, Y142, and H175 together coordinate 4-imidazolone-5-propanoate. N-formimidoyl-L-glutamate is bound at residue Y142. H238 contacts Fe(3+). Position 238 (H238) interacts with Zn(2+). Q241 serves as a coordination point for 4-imidazolone-5-propanoate. A Fe(3+)-binding site is contributed by D313. D313 is a Zn(2+) binding site. Residues N315 and G317 each contribute to the N-formimidoyl-L-glutamate site. T318 is a 4-imidazolone-5-propanoate binding site.

This sequence belongs to the metallo-dependent hydrolases superfamily. HutI family. Zn(2+) serves as cofactor. It depends on Fe(3+) as a cofactor.

Its subcellular location is the cytoplasm. It carries out the reaction 4-imidazolone-5-propanoate + H2O = N-formimidoyl-L-glutamate. Its pathway is amino-acid degradation; L-histidine degradation into L-glutamate; N-formimidoyl-L-glutamate from L-histidine: step 3/3. Catalyzes the hydrolytic cleavage of the carbon-nitrogen bond in imidazolone-5-propanoate to yield N-formimidoyl-L-glutamate. It is the third step in the universal histidine degradation pathway. The polypeptide is Imidazolonepropionase (Xanthomonas euvesicatoria pv. vesicatoria (strain 85-10) (Xanthomonas campestris pv. vesicatoria)).